The following is a 200-amino-acid chain: Large ribosomal subunit protein uL4 (200 aa).

The disordered stretch occupies residues 42 to 65 (TRAQKTRSDVSGGGAKPWRQKGTG).

Belongs to the universal ribosomal protein uL4 family. As to quaternary structure, part of the 50S ribosomal subunit.

In terms of biological role, one of the primary rRNA binding proteins, this protein initially binds near the 5'-end of the 23S rRNA. It is important during the early stages of 50S assembly. It makes multiple contacts with different domains of the 23S rRNA in the assembled 50S subunit and ribosome. Functionally, forms part of the polypeptide exit tunnel. This is Large ribosomal subunit protein uL4 from Photobacterium profundum (strain SS9).